The sequence spans 166 residues: Putative membrane protein 162 (166 aa).

A topological domain (intravirion) is located at residue M1. The helical transmembrane segment at 2 to 22 (YYPAVQVLIGIILVDNFNTEF) threads the bilayer. At 23–166 (LSSEKKNCKT…TIMGIARNIL (144 aa)) the chain is on the virion surface side.

It belongs to the asfivirus envelope protein p22 family.

It is found in the virion membrane. The protein resides in the host cell membrane. The sequence is that of Putative membrane protein 162 from African swine fever virus (isolate Tick/Malawi/Lil 20-1/1983) (ASFV).